A 223-amino-acid polypeptide reads, in one-letter code: DNA mismatch repair protein MutH (223 aa).

Belongs to the MutH family.

The protein localises to the cytoplasm. Sequence-specific endonuclease that cleaves unmethylated GATC sequences. It is involved in DNA mismatch repair. This chain is DNA mismatch repair protein MutH, found in Haemophilus influenzae (strain PittGG).